Reading from the N-terminus, the 426-residue chain is Histidine--tRNA ligase (426 aa).

Belongs to the class-II aminoacyl-tRNA synthetase family.

The protein resides in the cytoplasm. It carries out the reaction tRNA(His) + L-histidine + ATP = L-histidyl-tRNA(His) + AMP + diphosphate + H(+). This Saccharolobus islandicus (strain Y.G.57.14 / Yellowstone #1) (Sulfolobus islandicus) protein is Histidine--tRNA ligase.